The primary structure comprises 233 residues: Uridylate kinase (233 aa).

ATP is bound by residues 8–11 (KLSG), glycine 51, and arginine 55. UMP-binding positions include aspartate 68 and 129–136 (TSNPFFTT). Threonine 156, tyrosine 162, and aspartate 165 together coordinate ATP.

Belongs to the UMP kinase family. In terms of assembly, homohexamer.

It localises to the cytoplasm. It catalyses the reaction UMP + ATP = UDP + ADP. It participates in pyrimidine metabolism; CTP biosynthesis via de novo pathway; UDP from UMP (UMPK route): step 1/1. Inhibited by UTP. Catalyzes the reversible phosphorylation of UMP to UDP. The polypeptide is Uridylate kinase (Thermosipho melanesiensis (strain DSM 12029 / CIP 104789 / BI429)).